The primary structure comprises 282 residues: Extent of cell elongation protein 1 (282 aa).

An N-terminal signal peptide occupies residues 1–18 (MKFSKVASFAFLALSSQA). A helical membrane pass occupies residues 68 to 92 (ISFAGIVSSIINQLPSIIQIIGNII).

The protein localises to the secreted. Its subcellular location is the host cell membrane. Functionally, secreted protein cleaved by KEX2 in 8 similar peptides (ECE1-I to ECE1-VIII). Stimulates biofilm formation. In terms of biological role, acts as a cytolytic peptide toxin that directly damages host epithelial membranes, triggers a danger response signaling pathway and activates epithelial immunity. Probably acts similarly to cationic antimicrobial peptide toxins, inducing lesions after binding to target cell membranes and causing an inward current associated with calcium influx. The polypeptide is Extent of cell elongation protein 1 (Candida tropicalis (strain ATCC MYA-3404 / T1) (Yeast)).